A 231-amino-acid polypeptide reads, in one-letter code: Probable septum site-determining protein MinC (231 aa).

Residues 101–125 are disordered; that stretch reads GKEKAPRPAPTPQAPAQNTTPVTKT. Over residues 114-123 the composition is skewed to low complexity; the sequence is APAQNTTPVT.

It belongs to the MinC family. In terms of assembly, interacts with MinD and FtsZ.

Its function is as follows. Cell division inhibitor that blocks the formation of polar Z ring septums. Rapidly oscillates between the poles of the cell to destabilize FtsZ filaments that have formed before they mature into polar Z rings. Prevents FtsZ polymerization. The chain is Probable septum site-determining protein MinC from Escherichia coli (strain ATCC 8739 / DSM 1576 / NBRC 3972 / NCIMB 8545 / WDCM 00012 / Crooks).